Here is a 162-residue protein sequence, read N- to C-terminus: Protein mmf1, mitochondrial (162 aa).

Belongs to the RutC family.

It localises to the mitochondrion. The protein localises to the cytoplasm. In terms of biological role, plays a role in the maintenance of mitochondrial DNA. In Schizosaccharomyces pombe (strain 972 / ATCC 24843) (Fission yeast), this protein is Protein mmf1, mitochondrial (mmf1).